The primary structure comprises 289 residues: DNA repair protein rad14 (289 aa).

Cysteine 116, cysteine 119, cysteine 137, and cysteine 140 together coordinate Zn(2+). A zinc finger spans residues 116-140; it reads CFECDSIELDTKYFDIFHCRVCHTC.

Belongs to the XPA family. Interacts with hrq1.

It is found in the nucleus. Its function is as follows. Involved in nucleotide excision repair (NER). Functional in repair of ultraviolet radiation induced damages and in mitotic mutation avoidance. Binds damaged DNA. Binds specifically to base-base mismatches or small insertion/deletion loops with unpaired nucleotides. Maintains GT repeat stability. Functions as a part of the short-patch excision repair system. This Schizosaccharomyces pombe (strain 972 / ATCC 24843) (Fission yeast) protein is DNA repair protein rad14.